Reading from the N-terminus, the 347-residue chain is Microfibril-associated glycoprotein 3 (347 aa).

The N-terminal stretch at 1–22 (MKLHYCLCILLVVTFVPTALVL) is a signal peptide. Residues 23-139 (EDVTPLGTNQ…TLRVIFTSGD (117 aa)) lie on the Extracellular side of the membrane. 4 N-linked (GlcNAc...) asparagine glycosylation sites follow: N31, N36, N63, and N103. The Ig-like C2-type domain occupies 47–130 (AGSYSGDDVI…SPTRASYSVT (84 aa)). C68 and C117 are oxidised to a cystine. Residues 140–160 (MSVYYMVVCLIAFTITLILNV) form a helical membrane-spanning segment. Residues 161–347 (TRLCLMSTHL…SAEGSTHHRE (187 aa)) lie on the Cytoplasmic side of the membrane. A disordered region spans residues 280 to 347 (NPELGRSNSP…SAEGSTHHRE (68 aa)). The segment covering 311 to 331 (VHLQSETKSIGTDSQDSSHFS) has biased composition (polar residues).

In terms of processing, glycosylated.

It localises to the cell membrane. Functionally, component of the elastin-associated microfibrils. The chain is Microfibril-associated glycoprotein 3 (Mfap3) from Rattus norvegicus (Rat).